A 362-amino-acid chain; its full sequence is 3-dehydroquinate synthase (362 aa).

NAD(+) is bound by residues 71–76 (DGERYK), 105–109 (GVIGD), 129–130 (TT), K142, K151, and 169–172 (CLKT). The Zn(2+) site is built by E184, H247, and H264.

It belongs to the sugar phosphate cyclases superfamily. Dehydroquinate synthase family. It depends on Co(2+) as a cofactor. The cofactor is Zn(2+). NAD(+) serves as cofactor.

The protein localises to the cytoplasm. It catalyses the reaction 7-phospho-2-dehydro-3-deoxy-D-arabino-heptonate = 3-dehydroquinate + phosphate. It participates in metabolic intermediate biosynthesis; chorismate biosynthesis; chorismate from D-erythrose 4-phosphate and phosphoenolpyruvate: step 2/7. In terms of biological role, catalyzes the conversion of 3-deoxy-D-arabino-heptulosonate 7-phosphate (DAHP) to dehydroquinate (DHQ). The chain is 3-dehydroquinate synthase from Salmonella arizonae (strain ATCC BAA-731 / CDC346-86 / RSK2980).